Reading from the N-terminus, the 164-residue chain is Phosphopantetheine adenylyltransferase (164 aa).

Thr14 provides a ligand contact to substrate. Residues 14 to 15 and His22 contribute to the ATP site; that span reads TF. Substrate contacts are provided by Lys46, Met78, and Arg92. ATP contacts are provided by residues 93–95, Glu103, and 128–134; these read GLR and HAFISST.

Belongs to the bacterial CoaD family. Homohexamer. Mg(2+) serves as cofactor.

Its subcellular location is the cytoplasm. It carries out the reaction (R)-4'-phosphopantetheine + ATP + H(+) = 3'-dephospho-CoA + diphosphate. Its pathway is cofactor biosynthesis; coenzyme A biosynthesis; CoA from (R)-pantothenate: step 4/5. Functionally, reversibly transfers an adenylyl group from ATP to 4'-phosphopantetheine, yielding dephospho-CoA (dPCoA) and pyrophosphate. In Vibrio vulnificus (strain CMCP6), this protein is Phosphopantetheine adenylyltransferase.